Consider the following 186-residue polypeptide: Peptidyl-tRNA hydrolase (186 aa).

A tRNA-binding site is contributed by tyrosine 14. The Proton acceptor role is filled by histidine 19. TRNA-binding residues include phenylalanine 64, asparagine 66, and asparagine 112.

It belongs to the PTH family. In terms of assembly, monomer.

The protein localises to the cytoplasm. It catalyses the reaction an N-acyl-L-alpha-aminoacyl-tRNA + H2O = an N-acyl-L-amino acid + a tRNA + H(+). Hydrolyzes ribosome-free peptidyl-tRNAs (with 1 or more amino acids incorporated), which drop off the ribosome during protein synthesis, or as a result of ribosome stalling. Its function is as follows. Catalyzes the release of premature peptidyl moieties from peptidyl-tRNA molecules trapped in stalled 50S ribosomal subunits, and thus maintains levels of free tRNAs and 50S ribosomes. The sequence is that of Peptidyl-tRNA hydrolase from Listeria monocytogenes serotype 4a (strain HCC23).